The chain runs to 513 residues: ATP synthase subunit alpha (513 aa).

169–176 (GDRQTGKT) lines the ATP pocket.

This sequence belongs to the ATPase alpha/beta chains family. In terms of assembly, F-type ATPases have 2 components, CF(1) - the catalytic core - and CF(0) - the membrane proton channel. CF(1) has five subunits: alpha(3), beta(3), gamma(1), delta(1), epsilon(1). CF(0) has three main subunits: a(1), b(2) and c(9-12). The alpha and beta chains form an alternating ring which encloses part of the gamma chain. CF(1) is attached to CF(0) by a central stalk formed by the gamma and epsilon chains, while a peripheral stalk is formed by the delta and b chains.

The protein localises to the cell inner membrane. The catalysed reaction is ATP + H2O + 4 H(+)(in) = ADP + phosphate + 5 H(+)(out). In terms of biological role, produces ATP from ADP in the presence of a proton gradient across the membrane. The alpha chain is a regulatory subunit. This chain is ATP synthase subunit alpha, found in Haemophilus influenzae (strain PittEE).